A 232-amino-acid polypeptide reads, in one-letter code: GFP-like non-fluorescent chromoprotein FP595 (232 aa).

Residues 63 to 65 (MYG) constitute a cross-link (2-iminomethyl-5-imidazolinone (Met-Gly)). (E)-2,3-didehydrotyrosine is present on tyrosine 64.

This sequence belongs to the GFP family. Post-translationally, contains a chromophore consisting of modified amino acid residues. The chromophore is formed by autocatalytic backbone condensation between Xaa-N and Gly-(N+2), oxidation of Tyr-(N+1) to didehydrotyrosine, and formation of a double bond to the alpha-amino nitrogen of residue Tyr-(N+1). Maturation of the chromophore requires nothing other than molecular oxygen. As to expression, tentacle tips.

In terms of biological role, pigment protein that is intensely purple in color. The chain is GFP-like non-fluorescent chromoprotein FP595 from Anemonia sulcata (Mediterranean snakelocks sea anemone).